We begin with the raw amino-acid sequence, 185 residues long: Ribosome-recycling factor (185 aa).

This sequence belongs to the RRF family.

The protein localises to the cytoplasm. Responsible for the release of ribosomes from messenger RNA at the termination of protein biosynthesis. May increase the efficiency of translation by recycling ribosomes from one round of translation to another. This is Ribosome-recycling factor from Aeromonas salmonicida (strain A449).